Reading from the N-terminus, the 272-residue chain is Putative phosphoenolpyruvate synthase regulatory protein (272 aa).

152-159 (GVSRCGKT) is a binding site for ADP.

Belongs to the pyruvate, phosphate/water dikinase regulatory protein family. PSRP subfamily.

The enzyme catalyses [pyruvate, water dikinase] + ADP = [pyruvate, water dikinase]-phosphate + AMP + H(+). It catalyses the reaction [pyruvate, water dikinase]-phosphate + phosphate + H(+) = [pyruvate, water dikinase] + diphosphate. Its function is as follows. Bifunctional serine/threonine kinase and phosphorylase involved in the regulation of the phosphoenolpyruvate synthase (PEPS) by catalyzing its phosphorylation/dephosphorylation. This chain is Putative phosphoenolpyruvate synthase regulatory protein, found in Pseudomonas savastanoi pv. phaseolicola (strain 1448A / Race 6) (Pseudomonas syringae pv. phaseolicola (strain 1448A / Race 6)).